Here is a 334-residue protein sequence, read N- to C-terminus: Serine/threonine-protein kinase (334 aa).

The Protein kinase domain occupies 53 to 333 (FEVLQPLQSG…DEILNFGMWT (281 aa)). Residues 59–67 (LQSGSEGRV) and Lys-82 each bind ATP. The active-site Proton acceptor is the Asp-167.

It belongs to the protein kinase superfamily. Ser/Thr protein kinase family.

The catalysed reaction is L-seryl-[protein] + ATP = O-phospho-L-seryl-[protein] + ADP + H(+). It catalyses the reaction L-threonyl-[protein] + ATP = O-phospho-L-threonyl-[protein] + ADP + H(+). In terms of biological role, able to phosphorylate in vitro the major virion phosphoprotein phosphorylated in vivo. This chain is Serine/threonine-protein kinase (PK), found in Sus scrofa (Pig).